The sequence spans 395 residues: Levanbiose-producing levanase (395 aa).

D1 is an active-site residue. Residues 59–60 (WT), 124–125 (RD), E173, and W261 contribute to the substrate site.

This sequence belongs to the glycosyl hydrolase 32 family.

Its subcellular location is the membrane. The enzyme catalyses Hydrolysis of (2-&gt;6)-beta-D-fructofuranan, to remove successive disaccharide residues as levanbiose, i.e. 6-(beta-D-fructofuranosyl)-D-fructose, from the end of the chain.. Catalyzes the degradation of levan mainly into levanbiose (difructose). Can also hydrolyze inulin. The protein is Levanbiose-producing levanase (levB) of Geobacillus stearothermophilus (Bacillus stearothermophilus).